The sequence spans 189 residues: Peptidyl-tRNA hydrolase (189 aa).

TRNA is bound at residue tyrosine 16. Catalysis depends on histidine 21, which acts as the Proton acceptor. TRNA contacts are provided by phenylalanine 67, asparagine 69, and asparagine 115.

This sequence belongs to the PTH family. As to quaternary structure, monomer.

It localises to the cytoplasm. The catalysed reaction is an N-acyl-L-alpha-aminoacyl-tRNA + H2O = an N-acyl-L-amino acid + a tRNA + H(+). Its function is as follows. Hydrolyzes ribosome-free peptidyl-tRNAs (with 1 or more amino acids incorporated), which drop off the ribosome during protein synthesis, or as a result of ribosome stalling. Catalyzes the release of premature peptidyl moieties from peptidyl-tRNA molecules trapped in stalled 50S ribosomal subunits, and thus maintains levels of free tRNAs and 50S ribosomes. This Legionella pneumophila subsp. pneumophila (strain Philadelphia 1 / ATCC 33152 / DSM 7513) protein is Peptidyl-tRNA hydrolase.